A 95-amino-acid chain; its full sequence is Small ribosomal subunit protein bS20 (95 aa).

This sequence belongs to the bacterial ribosomal protein bS20 family.

Its function is as follows. Binds directly to 16S ribosomal RNA. This is Small ribosomal subunit protein bS20 from Ehrlichia chaffeensis (strain ATCC CRL-10679 / Arkansas).